The following is an 88-amino-acid chain: MFNLFLTDTVWYVGQIIFIVAVCLMVTIIVVAFLASIKRCIQLCGLCNTLLLSPSIYLYNRSKQLYKYYNEEVRPPPLEVDDNIIQTL.

Topologically, residues 1–16 are virion surface; that stretch reads MFNLFLTDTVWYVGQI. A helical membrane pass occupies residues 17–37; that stretch reads IFIVAVCLMVTIIVVAFLASI. The Intravirion segment spans residues 38–79; it reads KRCIQLCGLCNTLLLSPSIYLYNRSKQLYKYYNEEVRPPPLE.

It belongs to the betacoronaviruses E protein family. Homopentamer. Interacts with membrane protein M in the budding compartment of the host cell, which is located between endoplasmic reticulum and the Golgi complex. Interacts with Nucleoprotein.

It is found in the host Golgi apparatus membrane. Plays a central role in virus morphogenesis and assembly. Acts as a viroporin and self-assembles in host membranes forming pentameric protein-lipid pores that allow ion transport. Also plays a role in the induction of apoptosis. The sequence is that of Envelope small membrane protein from Mus musculus (Mouse).